The sequence spans 561 residues: Carboxylesterase 4A (561 aa).

A signal peptide spans 1–20 (MRWILCWSLTLCLMAQTALG). Cys88 and Cys116 are disulfide-bonded. Residue Asn214 is glycosylated (N-linked (GlcNAc...) asparagine). Ser221 serves as the catalytic Acyl-ester intermediate. An intrachain disulfide couples Cys273 to Cys284. A glycan (N-linked (GlcNAc...) asparagine) is linked at Asn276. The active-site Charge relay system is Glu353. A glycan (N-linked (GlcNAc...) asparagine) is linked at Asn388. The active-site Charge relay system is His467.

Belongs to the type-B carboxylesterase/lipase family.

It is found in the secreted. Probable carboxylesterase. The protein is Carboxylesterase 4A (CES4A) of Homo sapiens (Human).